Consider the following 160-residue polypeptide: Small ribosomal subunit protein uS7 (160 aa).

It belongs to the universal ribosomal protein uS7 family. In terms of assembly, part of the 30S ribosomal subunit. Contacts proteins S9 and S11.

Functionally, one of the primary rRNA binding proteins, it binds directly to 16S rRNA where it nucleates assembly of the head domain of the 30S subunit. Is located at the subunit interface close to the decoding center, probably blocks exit of the E-site tRNA. This is Small ribosomal subunit protein uS7 from Anaplasma phagocytophilum (strain HZ).